A 599-amino-acid polypeptide reads, in one-letter code: Nucleoporin p58/p45 (599 aa).

5 consecutive repeat copies span residues 7–8 (FG), 30–31 (FG), 44–45 (FG), 63–64 (FG), and 68–69 (FG). A 14 X 2 AA repeats of F-G region spans residues 7-579 (FGSGTLGSTT…VSNPASAGFG (573 aa)). A disordered region spans residues 213–247 (NEGLGGIDFSSSSDKKSDKTGTRPEDSKALKDENL). Basic and acidic residues predominate over residues 225–246 (SDKKSDKTGTRPEDSKALKDEN). 2 coiled-coil regions span residues 256–276 (ENLQKFVKEQKQVQEEISRMS) and 314–381 (ETAQ…SHIT). Phosphothreonine is present on Thr-331. Repeat copies occupy residues 488–489 (FG), 492–493 (FG), 513–514 (FG), 519–520 (FG), 529–530 (FG), 531–532 (FG), 545–546 (FG), 568–569 (FG), and 578–579 (FG). The tract at residues 579-599 (GTGGQLLQLKKPPAGNKRGKR) is disordered.

It belongs to the NUP58 family. Component of the p62 complex, a complex at least composed of NUP62, NUP54, and NUP58. Interacts with NUTF2. Interacts with SRP1-alpha and Importin p97 proteins when they are together, but not with SRP1-alpha protein alone. O-glycosylated.

Its subcellular location is the nucleus. The protein resides in the nuclear pore complex. It localises to the nucleus membrane. In terms of biological role, component of the nuclear pore complex, a complex required for the trafficking across the nuclear membrane. This chain is Nucleoporin p58/p45, found in Homo sapiens (Human).